The following is a 93-amino-acid chain: Neutrophil cationic peptide 1 type A (93 aa).

Residues 1-19 form the signal peptide; sequence MRTVPLFAACLLLTLMAQA. The propeptide occupies 20-62; the sequence is EPLPRAADHSDTKMKGDREDHVAVISFWEEESTSLEDAGAGAG. 3 disulfides stabilise this stretch: Cys-65/Cys-93, Cys-67/Cys-82, and Cys-72/Cys-92.

Belongs to the alpha-defensin family.

Its subcellular location is the secreted. Functionally, has antibiotic, anti-fungi and antiviral activity. This chain is Neutrophil cationic peptide 1 type A, found in Cavia porcellus (Guinea pig).